An 84-amino-acid polypeptide reads, in one-letter code: Elongation factor 1-beta (84 aa).

Belongs to the EF-1-beta/EF-1-delta family.

Its function is as follows. Promotes the exchange of GDP for GTP in EF-1-alpha/GDP, thus allowing the regeneration of EF-1-alpha/GTP that could then be used to form the ternary complex EF-1-alpha/GTP/AAtRNA. The chain is Elongation factor 1-beta from Methanoculleus marisnigri (strain ATCC 35101 / DSM 1498 / JR1).